A 339-amino-acid chain; its full sequence is Ribonucleoside-diphosphate reductase subunit beta (339 aa).

Residues Asp87 and His121 each contribute to the Fe cation site. Tyr125 is an active-site residue. His215 provides a ligand contact to Fe cation.

The protein belongs to the ribonucleoside diphosphate reductase small chain family. As to quaternary structure, tetramer of two alpha and two beta subunits. Requires Fe cation as cofactor.

It carries out the reaction a 2'-deoxyribonucleoside 5'-diphosphate + [thioredoxin]-disulfide + H2O = a ribonucleoside 5'-diphosphate + [thioredoxin]-dithiol. In terms of biological role, provides the precursors necessary for DNA synthesis. Catalyzes the biosynthesis of deoxyribonucleotides from the corresponding ribonucleotides. The protein is Ribonucleoside-diphosphate reductase subunit beta (nrdF) of Mycoplasmoides gallisepticum (strain R(low / passage 15 / clone 2)) (Mycoplasma gallisepticum).